We begin with the raw amino-acid sequence, 576 residues long: (E,E)-alpha-farnesene synthase (576 aa).

Residues Arg-289, Asp-326, Asp-330, Arg-468, and Asn-471 each coordinate (2E,6E)-farnesyl diphosphate. Mg(2+) is bound by residues Asp-326 and Asp-330. The DDXXD motif signature appears at 326-330 (DDVYD). Positions 471, 475, and 479 each coordinate Mg(2+). Residues Asp-484 and Ser-487 each coordinate K(+).

It belongs to the terpene synthase family. Tpsb subfamily. In terms of assembly, monomer. Mg(2+) is required as a cofactor. Requires Mn(2+) as cofactor. It depends on K(+) as a cofactor.

The protein resides in the cytoplasm. The catalysed reaction is (2E,6E)-farnesyl diphosphate = (3E,6E)-alpha-farnesene + diphosphate. Functionally, sesquiterpene synthase catalyzing the production of (E,E)-alpha-farnesene, the predominant terpene produced during storage of fruits. Produces all six isomers (E,E)-alpha-farnesene, (Z,E)-alpha-farnesene, (E,Z)-alpha-farnesene, (Z,Z)-alpha-farnesene, (E)-beta-farnesene and (Z)-beta-farnesene from a mix of isomeric forms of the farnesyl diphosphate precursor. Able to convert geranyl diphosphate to the monoterpenes (E)-beta-ocimene, linalool and beta-myrcene. Also has a prenyltransferase activity producing alpha-farnesene directly from geranyl diphosphate and isoprenyl diphosphate. The protein is (E,E)-alpha-farnesene synthase (AFS1) of Malus domestica (Apple).